Reading from the N-terminus, the 142-residue chain is Small ribosomal subunit protein uS12 (142 aa).

The protein belongs to the universal ribosomal protein uS12 family. As to quaternary structure, part of the 30S ribosomal subunit.

In terms of biological role, with S4 and S5 plays an important role in translational accuracy. Located at the interface of the 30S and 50S subunits. This is Small ribosomal subunit protein uS12 from Thermoplasma volcanium (strain ATCC 51530 / DSM 4299 / JCM 9571 / NBRC 15438 / GSS1).